A 118-amino-acid polypeptide reads, in one-letter code: Small ribosomal subunit protein uS13 (118 aa).

Residues 91–118 (HRRSLPVRGQRTKTNARTRKGPRKPIKA) are disordered.

It belongs to the universal ribosomal protein uS13 family. Part of the 30S ribosomal subunit. Forms a loose heterodimer with protein S19. Forms two bridges to the 50S subunit in the 70S ribosome.

Located at the top of the head of the 30S subunit, it contacts several helices of the 16S rRNA. In the 70S ribosome it contacts the 23S rRNA (bridge B1a) and protein L5 of the 50S subunit (bridge B1b), connecting the 2 subunits; these bridges are implicated in subunit movement. Contacts the tRNAs in the A and P-sites. This chain is Small ribosomal subunit protein uS13, found in Francisella philomiragia subsp. philomiragia (strain ATCC 25017 / CCUG 19701 / FSC 153 / O#319-036).